Consider the following 342-residue polypeptide: Ferredoxin--NADP reductase (342 aa).

The FAD site is built by C17, D36, Q44, Y49, V89, F124, D289, and T330.

Belongs to the ferredoxin--NADP reductase type 2 family. Homodimer. The cofactor is FAD.

It carries out the reaction 2 reduced [2Fe-2S]-[ferredoxin] + NADP(+) + H(+) = 2 oxidized [2Fe-2S]-[ferredoxin] + NADPH. In Nitrobacter winogradskyi (strain ATCC 25391 / DSM 10237 / CIP 104748 / NCIMB 11846 / Nb-255), this protein is Ferredoxin--NADP reductase.